Reading from the N-terminus, the 579-residue chain is Fatty-acid amide hydrolase 1 (579 aa).

Residues 9–29 (ALPGASGVALACCFVAAAVAL) traverse the membrane as a helical segment. The Cytoplasmic segment spans residues 30–403 (RWSGRRTARG…GDFVDPCLGD (374 aa)). Lysine 142 serves as the catalytic Charge relay system. Substrate is bound by residues methionine 191, serine 217, and 238 to 241 (IGGS). The active-site Charge relay system is the serine 217. Serine 241 acts as the Acyl-ester intermediate in catalysis. Residue serine 241 is modified to Phosphoserine. An intramembrane segment occupies 404–433 (LVSILKLPQWLKGLLAFLVKPLLPRLSAFL). Residues 434 to 579 (SNMKSRSAGK…RLMTPEKQSS (146 aa)) are Cytoplasmic-facing.

The protein belongs to the amidase family. In terms of assembly, homodimer. In terms of tissue distribution, highly expressed in the brain, small intestine, pancreas, skeletal muscle and testis. Also expressed in the kidney, liver, lung, placenta and prostate.

The protein localises to the endomembrane system. It localises to the cytoplasm. Its subcellular location is the cytoskeleton. The catalysed reaction is N-(5Z,8Z,11Z,14Z-eicosatetraenoyl)-ethanolamine + H2O = ethanolamine + (5Z,8Z,11Z,14Z)-eicosatetraenoate. The enzyme catalyses (9Z)-octadecenamide + H2O = (9Z)-octadecenoate + NH4(+). It carries out the reaction 2-(5Z,8Z,11Z,14Z-eicosatetraenoyl)-glycerol + H2O = glycerol + (5Z,8Z,11Z,14Z)-eicosatetraenoate + H(+). It catalyses the reaction N-(9Z-octadecenoyl) ethanolamine + H2O = ethanolamine + (9Z)-octadecenoate. The catalysed reaction is N-hexadecanoylethanolamine + H2O = ethanolamine + hexadecanoate. The enzyme catalyses hexadecanamide + H2O = hexadecanoate + NH4(+). It carries out the reaction tetradecamide + H2O = tetradecanoate + NH4(+). It catalyses the reaction N-(9Z-octadecenoyl)-taurine + H2O = taurine + (9Z)-octadecenoate. The catalysed reaction is (9Z,12Z,15Z)-octadecatrienamide + H2O = (9Z,12Z,15Z)-octadecatrienoate + NH4(+). The enzyme catalyses (5Z,8Z,11Z,14Z)-eicosatetraenamide + H2O = (5Z,8Z,11Z,14Z)-eicosatetraenoate + NH4(+). It carries out the reaction (6Z)-octadecenamide + H2O = (6Z)-octadecenoate + NH4(+). It catalyses the reaction (15Z)-tetracosenamide + H2O = (15Z)-tetracosenoate + NH4(+). The catalysed reaction is (8Z,11Z,14Z)-eicosatrienamide + H2O = (8Z,11Z,14Z)-eicosatrienoate + NH4(+). The enzyme catalyses (11Z,14Z,17Z)-eicosatrienamide + H2O = (11Z,14Z,17Z)-eicosatrienoate + NH4(+). It carries out the reaction (11Z,14Z)-eicosadienamide + H2O = (11Z,14Z)-eicosadienoate + NH4(+). It catalyses the reaction (9Z,12Z)-octadecadienamide + H2O = (9Z,12Z)-octadecadienoate + NH4(+). The catalysed reaction is 1-O-methyl-(5Z,8Z,11Z,14Z)-eicosatetraenoate + H2O = methanol + (5Z,8Z,11Z,14Z)-eicosatetraenoate + H(+). The enzyme catalyses (11Z)-eicosenamide + H2O = (11Z)-eicosenoate + NH4(+). It carries out the reaction N-(9Z-hexadecenoyl) ethanolamine + H2O = (9Z)-hexadecenoate + ethanolamine. It catalyses the reaction N-octadecanoyl ethanolamine + H2O = octadecanoate + ethanolamine. The catalysed reaction is N-docosanoyl-ethanolamine + H2O = docosanoate + ethanolamine. The enzyme catalyses N-tetracosanoyl-taurine + H2O = tetracosanoate + taurine. It carries out the reaction N-(15Z-tetracosenoyl)-ethanolamine + H2O = (15Z)-tetracosenoate + ethanolamine. It catalyses the reaction N-docosanoyl-taurine + H2O = docosanoate + taurine. The catalysed reaction is N-(15Z-tetracosenoyl)-taurine + H2O = (15Z)-tetracosenoate + taurine. The enzyme catalyses N-tricosanoyl-taurine + H2O = tricosanoate + taurine. It carries out the reaction (9Z)-octadecenoate + glycine = N-(9Z-octadecenoyl)glycine + H2O. It catalyses the reaction N-(5Z,8Z,11Z,14Z)-eicosatetraenoyl-glycine + H2O = (5Z,8Z,11Z,14Z)-eicosatetraenoate + glycine. The catalysed reaction is N-(5Z,8Z,11Z,14Z-eicosatetraenoyl)-L-serine + H2O = (5Z,8Z,11Z,14Z)-eicosatetraenoate + L-serine. Its activity is regulated as follows. Inhibited by O-aryl carbamates and alpha-keto heterocycles. Inhibited by trifluoromethyl ketone. In terms of biological role, catalyzes the hydrolysis of endogenous amidated lipids like the sleep-inducing lipid oleamide ((9Z)-octadecenamide), the endocannabinoid anandamide (N-(5Z,8Z,11Z,14Z-eicosatetraenoyl)-ethanolamine), as well as other fatty amides, to their corresponding fatty acids, thereby regulating the signaling functions of these molecules. Hydrolyzes polyunsaturated substrate anandamide preferentially as compared to monounsaturated substrates. It can also catalyze the hydrolysis of the endocannabinoid 2-arachidonoylglycerol (2-(5Z,8Z,11Z,14Z-eicosatetraenoyl)-glycerol). FAAH cooperates with PM20D1 in the hydrolysis of amino acid-conjugated fatty acids such as N-fatty acyl glycine and N-fatty acyl-L-serine, thereby acting as a physiological regulator of specific subsets of intracellular, but not of extracellular, N-fatty acyl amino acids. The chain is Fatty-acid amide hydrolase 1 (FAAH) from Homo sapiens (Human).